We begin with the raw amino-acid sequence, 190 residues long: dCTP deaminase, dUMP-forming (190 aa).

Residues 101–106, Asp-119, 127–129, Gln-148, Tyr-162, Lys-170, and Gln-174 contribute to the dCTP site; these read KSSLGR and TLE. Glu-129 (proton donor/acceptor) is an active-site residue. The interval 160–190 is disordered; the sequence is HPYGSSRAGSKYQGQRGPTPSRSYQNFIRST. Residues 171-190 show a composition bias toward polar residues; it reads YQGQRGPTPSRSYQNFIRST.

It belongs to the dCTP deaminase family. Homotrimer.

The enzyme catalyses dCTP + 2 H2O = dUMP + NH4(+) + diphosphate. It participates in pyrimidine metabolism; dUMP biosynthesis; dUMP from dCTP: step 1/1. Functionally, bifunctional enzyme that catalyzes both the deamination of dCTP to dUTP and the hydrolysis of dUTP to dUMP without releasing the toxic dUTP intermediate. The protein is dCTP deaminase, dUMP-forming of Mycobacterium tuberculosis (strain ATCC 25177 / H37Ra).